The sequence spans 485 residues: Protein nucleotidyltransferase YdiU (485 aa).

ATP is bound by residues Gly-90, Gly-92, Arg-93, Lys-113, Asp-125, Gly-126, Arg-176, and Arg-183. Asp-252 serves as the catalytic Proton acceptor. Asn-253 and Asp-262 together coordinate Mg(2+). Asp-262 contacts ATP.

This sequence belongs to the SELO family. Requires Mg(2+) as cofactor. Mn(2+) serves as cofactor.

It carries out the reaction L-seryl-[protein] + ATP = 3-O-(5'-adenylyl)-L-seryl-[protein] + diphosphate. It catalyses the reaction L-threonyl-[protein] + ATP = 3-O-(5'-adenylyl)-L-threonyl-[protein] + diphosphate. The catalysed reaction is L-tyrosyl-[protein] + ATP = O-(5'-adenylyl)-L-tyrosyl-[protein] + diphosphate. The enzyme catalyses L-histidyl-[protein] + UTP = N(tele)-(5'-uridylyl)-L-histidyl-[protein] + diphosphate. It carries out the reaction L-seryl-[protein] + UTP = O-(5'-uridylyl)-L-seryl-[protein] + diphosphate. It catalyses the reaction L-tyrosyl-[protein] + UTP = O-(5'-uridylyl)-L-tyrosyl-[protein] + diphosphate. Functionally, nucleotidyltransferase involved in the post-translational modification of proteins. It can catalyze the addition of adenosine monophosphate (AMP) or uridine monophosphate (UMP) to a protein, resulting in modifications known as AMPylation and UMPylation. The sequence is that of Protein nucleotidyltransferase YdiU from Aliivibrio fischeri (strain MJ11) (Vibrio fischeri).